Consider the following 121-residue polypeptide: Holin-like protein CidA (121 aa).

Helical transmembrane passes span 3 to 23 (WWKLSGQILLLFCFAWTGEWI), 30 to 50 (PVPGSIIGIFLLLISLKFNLV), 58 to 78 (GADFLLKELILFFIPSAVAVI), and 89 to 109 (IDLILIIMISTLCVTLVTGLL).

It belongs to the CidA/LrgA family. CidA subfamily.

It localises to the cell membrane. In terms of biological role, increases the activity of extracellular murein hydrolases possibly by mediating their export via hole formation. Inhibited by the antiholin-like proteins LrgAB. In an unstressed cell, the LrgAB products probably inhibit the function of the CidA protein. When a cell is stressed by the addition of antibiotics or by other factors in the environment, CidA possibly oligomerizes within the bacterial cell membrane, creating lesions that disrupt the proton motive force, which in turn results in loss of cell viability. These lesions are also hypothesized to regulate the subsequent cell lysis by either allowing the murein hydrolases access to the cell wall substrate and/or regulating their activity by a possible change in the cell wall pH that results from loss of membrane potential. This chain is Holin-like protein CidA, found in Bacillus cereus (strain ATCC 10987 / NRS 248).